The sequence spans 72 residues: Sperm protein associated with the nucleus on the X chromosome N1 (72 aa).

The tract at residues 1-44 is disordered; that stretch reads MEQPTSSINGEKRKSPCESNNENDEMQETPNRDLAPEPSLKKMK.

It belongs to the SPAN-X family.

The protein is Sperm protein associated with the nucleus on the X chromosome N1 (SPANXN1) of Homo sapiens (Human).